The chain runs to 1272 residues: Presporeless protein A (1272 aa).

The Nuclear localization signal motif lies at 146 to 161; the sequence is KDKRIKPIDPKKKISR. 2 disordered regions span residues 369 to 403 and 468 to 490; these read ASTI…DDTS and STSS…NQLK. Over residues 374–392 the composition is skewed to acidic residues; that stretch reads DGEEEDDDDDDNDVDGNDD. The segment covering 393–403 has biased composition (basic and acidic residues); sequence DNNKEKVDDTS. A compositionally biased stretch (low complexity) spans 468–487; it reads STSSTNTASSTRSKASSNSN.

Its subcellular location is the nucleus. Functionally, functions autonomously, very early in the prespore pathway, to control prespore cell differentiation, maybe at the level of transcription. Also required for proper aggregation. The chain is Presporeless protein A (pslA) from Dictyostelium discoideum (Social amoeba).